The chain runs to 391 residues: Small ribosomal subunit protein bS1 (391 aa).

4 S1 motif domains span residues 16 to 90 (GDKV…LSRR), 108 to 173 (NEII…LSRK), 194 to 262 (GDVI…LSIK), and 279 to 348 (NDVI…LSIK).

This sequence belongs to the bacterial ribosomal protein bS1 family.

Its function is as follows. Binds mRNA; thus facilitating recognition of the initiation point. It is needed to translate mRNA with a short Shine-Dalgarno (SD) purine-rich sequence. This is Small ribosomal subunit protein bS1 (rpsA) from Staphylococcus aureus (strain N315).